The following is a 386-amino-acid chain: Phosphoglycerate kinase (386 aa).

Substrate-binding positions include 21-23 (DLN), Arg-36, 59-62 (HLGR), Arg-112, and Arg-145. Residues Lys-196, Glu-313, and 339-342 (GGDT) contribute to the ATP site.

The protein belongs to the phosphoglycerate kinase family. As to quaternary structure, monomer.

It localises to the cytoplasm. The enzyme catalyses (2R)-3-phosphoglycerate + ATP = (2R)-3-phospho-glyceroyl phosphate + ADP. It functions in the pathway carbohydrate degradation; glycolysis; pyruvate from D-glyceraldehyde 3-phosphate: step 2/5. The sequence is that of Phosphoglycerate kinase from Haemophilus influenzae (strain 86-028NP).